The following is a 610-amino-acid chain: MANHDQQTVSSAAATTSASPSPVVLPKTSENEQLLRIRHSMSHVMAMAVQQLFPNARVTIGPWTESGFYYDFDNPEPFTEADLKAIKKGMIKIINKKLPLERVEVSRSEAEEKIKAQNEPYKLEILEGLQEPITLYTLGEDWWDLCAGPHVENTGQLNAKAFELESVAGAYWRGDETKAQLQRIYGTAWETAEQLAEHKRRKEEALRRDHRRIGKDLDLFSIEDEAGAGLVFWHPRGARMRLLIEEFWRQAHFEGGYELLYTPHVADISLWKTSGHLDFYAESMFGPMEVDEREYQLKPMNCPFHVLTYASKLRSYRELPIRWAELGTVYRYERPGVMHGLMRVRGFTQDDAHVFCLPEQISDEILKILDLTERILSTFDFNTYEINLSTRPEKSIGDDAVWDLATKGLIEALERKGWAYKIDEGGGAFYGPKIDLKIEDAIGRMWQCSTIQLDFNLPERFKLDYIAADGSKQRPIMIHRAIFGSLERFFGIMTENYAGDYPLWLAPEQVRLLPVTDEVQPYAESLLDQLTQAGVRATIDRSGDRLGKLIRTGEQMKIPVLAVIGAKEAEQNAVSLRSRRDGDLGVVAVADLLRAAQNANSQRAAGLELN.

The tract at residues 1 to 29 (MANHDQQTVSSAAATTSASPSPVVLPKTS) is disordered. Positions 8–24 (TVSSAAATTSASPSPVV) are enriched in low complexity. The segment at 209 to 502 (DHRRIGKDLD…MTENYAGDYP (294 aa)) is catalytic. Zn(2+) is bound by residues Cys-302, His-353, and His-479.

Belongs to the class-II aminoacyl-tRNA synthetase family. Homodimer. Zn(2+) serves as cofactor.

It is found in the cytoplasm. The catalysed reaction is tRNA(Thr) + L-threonine + ATP = L-threonyl-tRNA(Thr) + AMP + diphosphate + H(+). In terms of biological role, catalyzes the attachment of threonine to tRNA(Thr) in a two-step reaction: L-threonine is first activated by ATP to form Thr-AMP and then transferred to the acceptor end of tRNA(Thr). Also edits incorrectly charged L-seryl-tRNA(Thr). The sequence is that of Threonine--tRNA ligase from Synechococcus sp. (strain WH7803).